The primary structure comprises 413 residues: Protein arginine N-methyltransferase 2 (413 aa).

Disordered stretches follow at residues 65–85 (DDEE…QKSV) and 148–178 (ELED…SAPQ). A compositionally biased stretch (acidic residues) spans 148–173 (ELEDDDEEEEEGQEEQTGTEEVEVEG). Positions 192–413 (TGPDVTNSRY…YRLPLCKYMD (222 aa)) constitute an RMT2 domain. Residues tyrosine 201, methionine 230, 250–255 (HGMGIV), 271–273 (EAH), 298–299 (WQ), and aspartate 318 contribute to the S-adenosyl-L-methionine site.

This sequence belongs to the class I-like SAM-binding methyltransferase superfamily. RMT2 methyltransferase family. Monomer.

The protein resides in the cytoplasm. It is found in the nucleus. S-adenosyl-L-methionine-dependent protein-arginine N-methyltransferase that methylates the delta-nitrogen atom of arginine residues to form N5-methylarginine (type IV) in target proteins. Monomethylates ribosomal protein L12. This Aspergillus oryzae (strain ATCC 42149 / RIB 40) (Yellow koji mold) protein is Protein arginine N-methyltransferase 2.